Consider the following 394-residue polypeptide: MAKEQFQRNKPHVNVGTIGHVDHGKTSLTAAITSVLAKKGFAEARGYDQIDAAPEERERGITISTAHVEYETENRHYAHVDCPGHADYVKNMITGAAQMDGAILVVAASDGPMPQTREHILLARQVGVPAIVVYMNKCDLVDDPDLLELVEMEIRELLNEYEFPGDDTPIIKGSAVKALEGDAAAEDSIMELMAAVDSYIPQPERPVDQPFLMPVEDVFSISGRGTVATGRIERGVIKKMEEVEIIGIKDTQKTAVTDIEMFRKLLDEGQAGDNVGLLLRGLKKEDIERGQVIIKPGTVKPHKNFKAEVYVLTKEEGGRHTPFFNNYRPQFYFRTTDVTGCCTLPEGVEMVMPGDNVNLEVQLITPIAMEKAMRFAIREGGRTVGAGRISEILD.

A tr-type G domain is found at 10-204; it reads KPHVNVGTIG…AVDSYIPQPE (195 aa). The tract at residues 19 to 26 is G1; it reads GHVDHGKT. A GTP-binding site is contributed by 19–26; sequence GHVDHGKT. Residue T26 coordinates Mg(2+). A G2 region spans residues 60–64; sequence GITIS. The interval 81 to 84 is G3; sequence DCPG. Residues 81–85 and 136–139 contribute to the GTP site; these read DCPGH and NKCD. Positions 136–139 are G4; that stretch reads NKCD. The segment at 174-176 is G5; the sequence is SAV.

The protein belongs to the TRAFAC class translation factor GTPase superfamily. Classic translation factor GTPase family. EF-Tu/EF-1A subfamily. As to quaternary structure, monomer.

It is found in the cytoplasm. The catalysed reaction is GTP + H2O = GDP + phosphate + H(+). Its function is as follows. GTP hydrolase that promotes the GTP-dependent binding of aminoacyl-tRNA to the A-site of ribosomes during protein biosynthesis. This chain is Elongation factor Tu, found in Akkermansia muciniphila (strain ATCC BAA-835 / DSM 22959 / JCM 33894 / BCRC 81048 / CCUG 64013 / CIP 107961 / Muc).